Consider the following 486-residue polypeptide: HTH-type transcriptional regulator PrpR (486 aa).

One can recognise an HTH cro/C1-type domain in the interval 22–76 (LRRLRQERGLTQVALAKALDLSTSYVNQLENDQRPITVPVLLLLTERFDLSAQYF). The segment at residues 33–52 (QVALAKALDLSTSYVNQLEN) is a DNA-binding region (H-T-H motif).

Belongs to the short-chain fatty acyl-CoA assimilation regulator (ScfR) family.

The protein operates within organic acid metabolism; propanoate degradation. It participates in steroid metabolism; cholesterol metabolism. Plays a key role in regulating expression of enzymes involved in the catabolism of short chain fatty acids (SCFA) via both the glyoxylate (acetyl degradation route) and the methylcitrate cycle (propionate degradation route). Required for intracellular growth in macrophages and for the assimilation of cholesterol-derived propionate. PrpR acts as a transcriptional activator of prpDC and icl genes when propionate is the main carbon source, and as a ramB repressor. During growth on propionate, PrpR also acts as a transcriptional repressor of dnaA, which encodes the DnaA initiator protein responsible for initiating chromosomal replication. It is possibly involved in the regulation of genes responsible for controlling cholesterol utilization. This Mycobacterium tuberculosis (strain ATCC 25618 / H37Rv) protein is HTH-type transcriptional regulator PrpR.